The following is a 152-amino-acid chain: Nucleoplasmin-like protein (152 aa).

Over residues 109 to 128 the composition is skewed to acidic residues; it reads EVVDMEEDDEEDDVAEDEED. The disordered stretch occupies residues 109-152; that stretch reads EVVDMEEDDEEDDVAEDEEDEHPKKRAKIENAADGKNAKNNKKK. The span at 136–145 shows a compositional bias: basic and acidic residues; that stretch reads KIENAADGKN.

Belongs to the nucleoplasmin family. In terms of assembly, decamer formed by two pentameric rings associated in a head-to-head fashion.

It is found in the nucleus. Functionally, binds to core histones and functions in the ATP-facilitated assembly of approximately regularly spaced nucleosomal arrays. May participate in parallel with other histone-binding proteins such as NAP-1. In terms of biological role, inactive for chromatin assembly. In vitro it appears to form a high molecular mass aggregate with the core histones. The protein is Nucleoplasmin-like protein (Nlp) of Drosophila melanogaster (Fruit fly).